We begin with the raw amino-acid sequence, 154 residues long: Aspartate carbamoyltransferase regulatory chain (154 aa).

4 residues coordinate Zn(2+): C109, C114, C138, and C141.

It belongs to the PyrI family. Contains catalytic and regulatory chains. The cofactor is Zn(2+).

Involved in allosteric regulation of aspartate carbamoyltransferase. In Pectobacterium carotovorum subsp. carotovorum (strain PC1), this protein is Aspartate carbamoyltransferase regulatory chain.